A 237-amino-acid chain; its full sequence is Sugar fermentation stimulation protein homolog (237 aa).

Belongs to the SfsA family.

The protein is Sugar fermentation stimulation protein homolog of Pseudomonas syringae pv. tomato (strain ATCC BAA-871 / DC3000).